A 302-amino-acid polypeptide reads, in one-letter code: Pseudouridine-5'-phosphate glycosidase (302 aa).

The active-site Proton donor is the glutamate 25. 2 residues coordinate substrate: lysine 86 and valine 106. Residue aspartate 138 participates in Mn(2+) binding. A substrate-binding site is contributed by 140–142 (SAD). Catalysis depends on lysine 159, which acts as the Nucleophile.

Belongs to the pseudouridine-5'-phosphate glycosidase family. As to quaternary structure, homotrimer. It depends on Mn(2+) as a cofactor.

The catalysed reaction is D-ribose 5-phosphate + uracil = psi-UMP + H2O. Catalyzes the reversible cleavage of pseudouridine 5'-phosphate (PsiMP) to ribose 5-phosphate and uracil. Functions biologically in the cleavage direction, as part of a pseudouridine degradation pathway. This Jannaschia sp. (strain CCS1) protein is Pseudouridine-5'-phosphate glycosidase.